Consider the following 106-residue polypeptide: UPF0145 protein PFL_3418 (106 aa).

The protein belongs to the UPF0145 family.

The sequence is that of UPF0145 protein PFL_3418 from Pseudomonas fluorescens (strain ATCC BAA-477 / NRRL B-23932 / Pf-5).